Reading from the N-terminus, the 282-residue chain is U1 small nuclear ribonucleoprotein A (282 aa).

Ala-2 carries the post-translational modification N-acetylalanine. An RRM 1 domain is found at 10-89; it reads HTIYINNLNE…KPMRIQYAKT (80 aa). N6-acetyllysine is present on Lys-60. The disordered stretch occupies residues 101–141; that stretch reads FVERDRKREKRKPKSQETPAAKKAVQGGAAAPVVGTVQGPV. Over residues 119–141 the composition is skewed to low complexity; sequence PAAKKAVQGGAAAPVVGTVQGPV. Arg-152 is modified (omega-N-methylarginine). An RRM 2 domain is found at 208-282; sequence HILFLTNLPE…NAMKISFAKK (75 aa).

It belongs to the RRM U1 A/B'' family. In terms of assembly, U1 snRNP is composed of the 7 core Sm proteins SNRPB, SNRPD1, SNRPD2, SNRPD3, SNRPE, SNRPF and SNRPG that assemble in a heptameric protein ring on the Sm site of the small nuclear RNA to form the core snRNP, and at least three U1 snRNP-specific proteins SNRNP70/U1-70K, SNRPA/U1-A and SNRPC/U1-C. Interacts with SFPQ; component of a snRNP-free complex with SFPQ.

Its subcellular location is the nucleus. Component of the spliceosomal U1 snRNP, which is essential for recognition of the pre-mRNA 5' splice-site and the subsequent assembly of the spliceosome. U1 snRNP is the first snRNP to interact with pre-mRNA. This interaction is required for the subsequent binding of U2 snRNP and the U4/U6/U5 tri-snRNP. SNRPA binds stem loop II of U1 snRNA. In a snRNP-free form (SF-A) may be involved in coupled pre-mRNA splicing and polyadenylation process. May bind preferentially to the 5'-UGCAC-3' motif on RNAs. This is U1 small nuclear ribonucleoprotein A (SNRPA) from Bos taurus (Bovine).